The primary structure comprises 50 residues: Photosystem II reaction center protein K (50 aa).

A propeptide spanning residues 1–13 is cleaved from the precursor; the sequence is MLNLNFTNITVMG. A helical membrane pass occupies residues 25–45; that stretch reads IVDILPIIPILFFLLAFVWQA.

This sequence belongs to the PsbK family. In terms of assembly, PSII is composed of 1 copy each of membrane proteins PsbA, PsbB, PsbC, PsbD, PsbE, PsbF, PsbH, PsbI, PsbJ, PsbK, PsbL, PsbM, PsbT, PsbY, PsbZ, Psb30/Ycf12, at least 3 peripheral proteins of the oxygen-evolving complex and a large number of cofactors. It forms dimeric complexes.

Its subcellular location is the plastid. It is found in the chloroplast thylakoid membrane. Its function is as follows. One of the components of the core complex of photosystem II (PSII). PSII is a light-driven water:plastoquinone oxidoreductase that uses light energy to abstract electrons from H(2)O, generating O(2) and a proton gradient subsequently used for ATP formation. It consists of a core antenna complex that captures photons, and an electron transfer chain that converts photonic excitation into a charge separation. The polypeptide is Photosystem II reaction center protein K (Euglena myxocylindracea).